Reading from the N-terminus, the 287-residue chain is Pantothenate synthetase (287 aa).

ATP is bound at residue 30 to 37; the sequence is MGNLHSGH. The active-site Proton donor is the His37. Residue Gln61 participates in (R)-pantoate binding. A beta-alanine-binding site is contributed by Gln61. Position 149–152 (149–152) interacts with ATP; it reads GEKD. Gln155 is a (R)-pantoate binding site. ATP contacts are provided by residues Val178 and 186 to 189; that span reads LSSR.

The protein belongs to the pantothenate synthetase family. As to quaternary structure, homodimer.

It localises to the cytoplasm. The enzyme catalyses (R)-pantoate + beta-alanine + ATP = (R)-pantothenate + AMP + diphosphate + H(+). The protein operates within cofactor biosynthesis; (R)-pantothenate biosynthesis; (R)-pantothenate from (R)-pantoate and beta-alanine: step 1/1. In terms of biological role, catalyzes the condensation of pantoate with beta-alanine in an ATP-dependent reaction via a pantoyl-adenylate intermediate. This Pseudomonas putida (strain GB-1) protein is Pantothenate synthetase.